The following is a 245-amino-acid chain: MRIVYDDVRDLKAIVQALLKLVDEALFDIKPEGIQLVAIDKAHISLIKIELPKEMFKEYDVPEEFKFGFNTQYMSKLLKAAKRKEEIIIEADSPEVVKLTLSGALNRVFNVNNIEVLPPEVPEVNLEFDIKATINASGFKNAIGEIAEVADTLLISANEEKVIVKGEGENKVEVEFSKDTGSLADIEFNKESSSAYDVEYLNDIISLTKLSDYVKVAFAEQKPMQLEFNMEGGGKVTYLLAPKLS.

This sequence belongs to the PCNA family. As to quaternary structure, homotrimer. The subunits circularize to form a toroid; DNA passes through its center. Replication factor C (RFC) is required to load the toroid on the DNA.

Functionally, sliding clamp subunit that acts as a moving platform for DNA processing. Responsible for tethering the catalytic subunit of DNA polymerase and other proteins to DNA during high-speed replication. The polypeptide is DNA polymerase sliding clamp 1 (Sulfurisphaera ohwakuensis).